The primary structure comprises 82 residues: Beta-defensin 119 (82 aa).

The first 19 residues, 1–19, serve as a signal peptide directing secretion; sequence MKFFLFFVILLAMEPVISG. 3 disulfide bridges follow: Cys26–Cys53, Cys33–Cys47, and Cys37–Cys54.

This sequence belongs to the beta-defensin family.

The protein localises to the secreted. Has antibacterial activity. In Canis lupus familiaris (Dog), this protein is Beta-defensin 119 (DEFB119).